Consider the following 190-residue polypeptide: Myosin, light chain 1, alkali; skeletal, fast (190 aa).

Over residues 1-17 (MAPKKDAKKPEPPKKAE) the composition is skewed to basic and acidic residues. A disordered region spans residues 1 to 33 (MAPKKDAKKPEPPKKAEPAPAPAPAPEPPKADA). Pro residues predominate over residues 19–28 (APAPAPAPEP). EF-hand domains lie at 46–81 (DQME…LGQN) and 123–158 (ATYD…LGEK).

In terms of assembly, myosin is a hexamer of 2 heavy chains and 4 light chains. Does not bind calcium. As to expression, expressed in fast muscle fibers during skeletal muscle differentiation.

Functionally, non-regulatory myosin light chain required for proper formation and/or maintenance of myofibers, and thus appropriate muscle function. In Danio rerio (Zebrafish), this protein is Myosin, light chain 1, alkali; skeletal, fast.